Here is a 240-residue protein sequence, read N- to C-terminus: Chromatin structure-remodeling complex protein BSH (240 aa).

It belongs to the SNF5 family. In terms of assembly, interacts with SWI3A and SWI3B, but not with BRM. In terms of tissue distribution, expressed in roots, stems, leaves, flowers and siliques.

It localises to the nucleus. Its function is as follows. Component of a multiprotein complex equivalent of the yeast SWI/SNF complex, an ATP-dependent chromatin-remodeling complex, which is required for the positive and negative regulation of gene expression of a large number of genes. It changes chromatin structure by altering DNA-histone contacts within a nucleosome, leading eventually to a change in nucleosome position, thus facilitating or repressing binding of gene-specific transcription factors. The polypeptide is Chromatin structure-remodeling complex protein BSH (BSH) (Arabidopsis thaliana (Mouse-ear cress)).